Reading from the N-terminus, the 609-residue chain is MNREERLARQSRIRNFSIIAHIDHGKSTLADRILEKTSALTQREMKDQMLDAMDLERERGITIKLNAVQLVYKANDGNEYIFHLIDTPGHVDFSYEVSRSLAACEGALLIVDAAQGIEAQTLANVYLALDNDLEILPVINKIDLPSAEPERVRQEVEDVIGLDASEAVLASAKNGIGIEEILEQIVEKVPAPSGDPEGPLKALIFDSLYDSYRGVVAYIRIVEGSVKPGQKIKMMATGKEFEVTEVGVFTPKPEKREELTVGDVGFLTASIKNVGDTRVGDTITSANNPADEPLPGYRRMNPMVYCGLYPVDTNDYNDLREALERLELNDASLQYEPETSQALGFGFRCGFLGLLHMEIIQERIEREFGIDLITTAPSVVYSVQLTNGEVQQIDNPSNMPDRQKIEEVEEPYVKATIMVPNDFVGAVMELCQGKRGIFIDMQYLDENRVQIIYEIPLSEIVYDFFDQLKSNTKGYASFDYELIGYKPSNLVKMDILLNGEVVDALSVIVHRDSAYERGKQIVEKLKELIPRQQFEVPVQASIGTKIIARSTIKAMRKNVLAKCYGGDISRKRKLLEKQKEGKKRMKAVGNVEVPQEAFMAVLRMDEPKK.

Residues S11–S193 enclose the tr-type G domain. GTP-binding positions include D23–T28 and N140–D143.

It belongs to the TRAFAC class translation factor GTPase superfamily. Classic translation factor GTPase family. LepA subfamily.

It localises to the cell membrane. The enzyme catalyses GTP + H2O = GDP + phosphate + H(+). Required for accurate and efficient protein synthesis under certain stress conditions. May act as a fidelity factor of the translation reaction, by catalyzing a one-codon backward translocation of tRNAs on improperly translocated ribosomes. Back-translocation proceeds from a post-translocation (POST) complex to a pre-translocation (PRE) complex, thus giving elongation factor G a second chance to translocate the tRNAs correctly. Binds to ribosomes in a GTP-dependent manner. This chain is Elongation factor 4, found in Halalkalibacterium halodurans (strain ATCC BAA-125 / DSM 18197 / FERM 7344 / JCM 9153 / C-125) (Bacillus halodurans).